The primary structure comprises 286 residues: 4-diphosphocytidyl-2-C-methyl-D-erythritol kinase (286 aa).

Lys11 is a catalytic residue. Position 94–104 (94–104) interacts with ATP; it reads PMGGGIGGGSS. Residue Asp136 is part of the active site.

This sequence belongs to the GHMP kinase family. IspE subfamily.

It carries out the reaction 4-CDP-2-C-methyl-D-erythritol + ATP = 4-CDP-2-C-methyl-D-erythritol 2-phosphate + ADP + H(+). It functions in the pathway isoprenoid biosynthesis; isopentenyl diphosphate biosynthesis via DXP pathway; isopentenyl diphosphate from 1-deoxy-D-xylulose 5-phosphate: step 3/6. Catalyzes the phosphorylation of the position 2 hydroxy group of 4-diphosphocytidyl-2C-methyl-D-erythritol. The polypeptide is 4-diphosphocytidyl-2-C-methyl-D-erythritol kinase (Pseudomonas putida (strain GB-1)).